Consider the following 424-residue polypeptide: Serine hydroxymethyltransferase 2 (424 aa).

(6S)-5,6,7,8-tetrahydrofolate contacts are provided by residues Leu125 and 129 to 131; that span reads GHL. The residue at position 234 (Lys234) is an N6-(pyridoxal phosphate)lysine. A (6S)-5,6,7,8-tetrahydrofolate-binding site is contributed by Glu250.

Belongs to the SHMT family. As to quaternary structure, homodimer. Requires pyridoxal 5'-phosphate as cofactor.

Its subcellular location is the cytoplasm. The enzyme catalyses (6R)-5,10-methylene-5,6,7,8-tetrahydrofolate + glycine + H2O = (6S)-5,6,7,8-tetrahydrofolate + L-serine. It participates in one-carbon metabolism; tetrahydrofolate interconversion. The protein operates within amino-acid biosynthesis; glycine biosynthesis; glycine from L-serine: step 1/1. In terms of biological role, catalyzes the reversible interconversion of serine and glycine with tetrahydrofolate (THF) serving as the one-carbon carrier. This reaction serves as the major source of one-carbon groups required for the biosynthesis of purines, thymidylate, methionine, and other important biomolecules. Also exhibits THF-independent aldolase activity toward beta-hydroxyamino acids, producing glycine and aldehydes, via a retro-aldol mechanism. The polypeptide is Serine hydroxymethyltransferase 2 (Ralstonia nicotianae (strain ATCC BAA-1114 / GMI1000) (Ralstonia solanacearum)).